Consider the following 101-residue polypeptide: Small ribosomal subunit protein uS14 (101 aa).

This sequence belongs to the universal ribosomal protein uS14 family. Part of the 30S ribosomal subunit. Contacts proteins S3 and S10.

In terms of biological role, binds 16S rRNA, required for the assembly of 30S particles and may also be responsible for determining the conformation of the 16S rRNA at the A site. This Bordetella parapertussis (strain 12822 / ATCC BAA-587 / NCTC 13253) protein is Small ribosomal subunit protein uS14.